Here is an 86-residue protein sequence, read N- to C-terminus: Large ribosomal subunit protein bL31 (86 aa).

The tract at residues Y65–K86 is disordered. Residues T74–K86 are compositionally biased toward basic and acidic residues.

It belongs to the bacterial ribosomal protein bL31 family. Type A subfamily. In terms of assembly, part of the 50S ribosomal subunit.

Its function is as follows. Binds the 23S rRNA. The chain is Large ribosomal subunit protein bL31 from Prochlorococcus marinus subsp. pastoris (strain CCMP1986 / NIES-2087 / MED4).